A 157-amino-acid polypeptide reads, in one-letter code: uncharacterized protein (157 aa).

The stretch at 36–63 (QIEELNELCQFFNISLTYTRESLEELEN) forms a coiled coil.

This is an uncharacterized protein from Bacillus subtilis (strain 168).